Here is a 1009-residue protein sequence, read N- to C-terminus: Protein naked cuticle (1009 aa).

Polar residues-rich tracts occupy residues 68 to 83 (IITTPPGNASGSASNK) and 121 to 130 (LPQDMSSSGS). The tract at residues 68–166 (IITTPPGNAS…QQQTAAAATG (99 aa)) is disordered. Low complexity predominate over residues 152–166 (QQQQQQQQTAAAATG). Positions 206–282 (EFTCDVSVEG…TVSPEGKSKS (77 aa)) are interaction with dsh. One can recognise an EF-hand domain in the interval 217–253 (KSSQPLQFSFTFYDLDGHHGKITKDDIVGIVYTIYES). Disordered stretches follow at residues 328–433 (MSKQ…QQQL), 456–479 (AGNEATVPDCPSSHRQLHHQRQQD), and 515–580 (GNDS…QQQR). The span at 349–359 (RRQHRYRPRKL) shows a compositional bias: basic residues. Basic and acidic residues predominate over residues 370 to 387 (NSEKEKERERERERESHA). A compositionally biased stretch (basic residues) spans 403-414 (KSHHHHHHHGRY). Residues 515 to 525 (GNDSGNWQNRH) show a composition bias toward polar residues. Low complexity-rich tracts occupy residues 526–535 (LQQSLQQQPQ) and 570–580 (HQQLQQQQQQR). Residues 584-613 (ECWKSALNRNDLISIIRESMEKNRLCFQLN) are required for nuclear localization and inhibition of Wnt signaling. 4 disordered regions span residues 619–662 (NVSP…SPLS), 773–799 (SAAHSPPPTPSNVATVQPIPKKSHNQK), 835–899 (LQQK…SAGS), and 955–982 (TESGGKQQQQQALEADEGQEQEVELDTS). Composition is skewed to low complexity over residues 624 to 638 (RQPAAQQQQQQQRQR) and 653 to 662 (SPAAPQSPLS). Basic residues predominate over residues 843-857 (RRHRHKQQQQQHHHQ). The span at 858-875 (QQQQQQQQQNQQQQQQQQ) shows a compositional bias: low complexity. The span at 968–979 (EADEGQEQEVEL) shows a compositional bias: acidic residues.

It belongs to the NKD family. Interacts with dsh.

Its subcellular location is the cell membrane. The protein resides in the cytoplasm. It is found in the nucleus. Functionally, cell autonomous antagonist of the canonical Wnt signaling pathway. May activate a second Wnt signaling pathway that controls planar cell polarity. Required for neuroblast specification. This is Protein naked cuticle from Drosophila pseudoobscura pseudoobscura (Fruit fly).